The following is a 141-amino-acid chain: Large ribosomal subunit protein uL11 (141 aa).

This sequence belongs to the universal ribosomal protein uL11 family. As to quaternary structure, part of the ribosomal stalk of the 50S ribosomal subunit. Interacts with L10 and the large rRNA to form the base of the stalk. L10 forms an elongated spine to which L12 dimers bind in a sequential fashion forming a multimeric L10(L12)X complex. Post-translationally, one or more lysine residues are methylated.

In terms of biological role, forms part of the ribosomal stalk which helps the ribosome interact with GTP-bound translation factors. In Streptococcus suis (strain 05ZYH33), this protein is Large ribosomal subunit protein uL11.